Here is a 461-residue protein sequence, read N- to C-terminus: Photosystem II CP43 reaction center protein (461 aa).

A propeptide spanning residues 1–2 (ME) is cleaved from the precursor. Residue threonine 3 is modified to N-acetylthreonine. A Phosphothreonine modification is found at threonine 3. A run of 5 helical transmembrane segments spans residues 57-81 (LFEV…PHIA), 122-143 (LIGP…KDKN), 166-188 (KAMY…RIIT), 243-263 (TPWP…LSYS), and 279-300 (WFNN…ASQA). [CaMn4O5] cluster is bound at residue glutamate 355. The chain crosses the membrane as a helical span at residues 435–459 (RARAAAAGFEKGIDRVDEPVLSMRP).

This sequence belongs to the PsbB/PsbC family. PsbC subfamily. In terms of assembly, PSII is composed of 1 copy each of membrane proteins PsbA, PsbB, PsbC, PsbD, PsbE, PsbF, PsbH, PsbI, PsbJ, PsbK, PsbL, PsbM, PsbT, PsbX, PsbY, PsbZ, Psb30/Ycf12, at least 3 peripheral proteins of the oxygen-evolving complex and a large number of cofactors. It forms dimeric complexes. It depends on Binds multiple chlorophylls and provides some of the ligands for the Ca-4Mn-5O cluster of the oxygen-evolving complex. It may also provide a ligand for a Cl- that is required for oxygen evolution. PSII binds additional chlorophylls, carotenoids and specific lipids. as a cofactor.

It localises to the plastid. Its subcellular location is the chloroplast thylakoid membrane. Functionally, one of the components of the core complex of photosystem II (PSII). It binds chlorophyll and helps catalyze the primary light-induced photochemical processes of PSII. PSII is a light-driven water:plastoquinone oxidoreductase, using light energy to abstract electrons from H(2)O, generating O(2) and a proton gradient subsequently used for ATP formation. The polypeptide is Photosystem II CP43 reaction center protein (Chlamydomonas moewusii (Chlamydomonas eugametos)).